A 348-amino-acid chain; its full sequence is MFSSVMVALVSLAVAVSANPGLSLKVSGPEAVDGVNNLKVVTTITNTGDETLKLLNDPRGALHTMPTDTFAITNESGETPSFIGVKVKYVPSMAAKSTGENVFAVIAPGQSVNVEHDLSAAYNFTSSGAGTYALEALNVFNYIDPETNEPVEIWADAEAHTTAVSGKLAVVRATPTLTRPVTYNGCSSSEQSALAAAASAAQSYVAESLSYLQTHTAATPRYTTWFGSYISSRHSTVLQHYTDMNSNDFSSYSFDCTCTAAGTFAYVYPNRFGTVYLCGAFWKAPTTGTDSQAGTLVHESSHFTRNGGTKDYAYGQAAAKSLATMDPDKAVMNADNHEYFSENNPAQS.

Positions 1-18 (MFSSVMVALVSLAVAVSA) are cleaved as a signal peptide. Positions 19–181 (NPGLSLKVSG…RATPTLTRPV (163 aa)) are excised as a propeptide. Cystine bridges form between C186/C256 and C258/C278. O-linked (Man) threonine; partial glycosylation occurs at T223. H298 provides a ligand contact to Zn(2+). E299 is a catalytic residue. Residues H302 and D311 each coordinate Zn(2+).

Requires Zn(2+) as cofactor.

The protein resides in the secreted. The enzyme catalyses Preferential cleavage in proteins: -Xaa-|-Lys- (in which Xaa may be Pro).. Its activity is regulated as follows. Inhibited by chelating agents such as EDTA and 1,10-phenanthroline. The polypeptide is Peptidyl-Lys metalloendopeptidase (MEP) (Grifola frondosa (Maitake)).